We begin with the raw amino-acid sequence, 428 residues long: Citrate synthase (428 aa).

Active-site residues include histidine 265, histidine 306, and aspartate 363.

Belongs to the citrate synthase family. Homohexamer.

It carries out the reaction oxaloacetate + acetyl-CoA + H2O = citrate + CoA + H(+). It participates in carbohydrate metabolism; tricarboxylic acid cycle; isocitrate from oxaloacetate: step 1/2. With respect to regulation, allosterically inhibited by NADH. The sequence is that of Citrate synthase (gltA) from Pseudomonas aeruginosa (strain ATCC 15692 / DSM 22644 / CIP 104116 / JCM 14847 / LMG 12228 / 1C / PRS 101 / PAO1).